The primary structure comprises 364 residues: Dihydroorotase (364 aa).

6 residues coordinate Zn(2+): His14, His16, Lys98, His137, His180, and Asp258. Lys98 is subject to N6-carboxylysine.

This sequence belongs to the metallo-dependent hydrolases superfamily. DHOase family. Class II DHOase subfamily. Zn(2+) serves as cofactor.

It catalyses the reaction (S)-dihydroorotate + H2O = N-carbamoyl-L-aspartate + H(+). The protein operates within pyrimidine metabolism; UMP biosynthesis via de novo pathway; (S)-dihydroorotate from bicarbonate: step 3/3. Catalyzes the conversion of ureidosuccinic acid (USA) to dihydroorotate, the third step of the de novo pyrimidine biosynthetic pathway. This is Dihydroorotase (URA4) from Saccharomyces cerevisiae (strain ATCC 204508 / S288c) (Baker's yeast).